The sequence spans 380 residues: Cytochrome b (380 aa).

4 consecutive transmembrane segments (helical) span residues 33–53, 77–98, 113–133, and 178–198; these read FGSL…FLAM, WLLR…YLHI, WNIG…GYVL, and FFTF…LHLL. His-83 and His-97 together coordinate heme b. The heme b site is built by His-182 and His-196. A ubiquinone is bound at residue His-201. The next 4 membrane-spanning stretches (helical) occupy residues 226–246, 288–308, 320–340, and 347–367; these read YKDL…ALLN, LGGV…PVLH, PSQT…WIGG, and FIII…ILIP.

Belongs to the cytochrome b family. The cytochrome bc1 complex contains 3 respiratory subunits (MT-CYB, CYC1 and UQCRFS1), 2 core proteins (UQCRC1 and UQCRC2) and probably 6 low-molecular weight proteins. Heme b serves as cofactor.

The protein resides in the mitochondrion inner membrane. Component of the ubiquinol-cytochrome c reductase complex (complex III or cytochrome b-c1 complex) that is part of the mitochondrial respiratory chain. The b-c1 complex mediates electron transfer from ubiquinol to cytochrome c. Contributes to the generation of a proton gradient across the mitochondrial membrane that is then used for ATP synthesis. This Atractosteus spatula (Alligator gar) protein is Cytochrome b (mt-cyb).